The following is a 650-amino-acid chain: Acetyl-coenzyme A synthetase (650 aa).

CoA contacts are provided by residues 191–194 (RGGR), Thr311, and Asn335. Residues 387–389 (GEP), 411–416 (DTWWQT), Asp500, and Arg515 each bind ATP. Ser523 contributes to the CoA binding site. Residue Arg526 coordinates ATP. Residues Val537, His539, and Val542 each contribute to the Mg(2+) site. Arg584 is a binding site for CoA. Lys609 carries the N6-acetyllysine modification.

The protein belongs to the ATP-dependent AMP-binding enzyme family. Requires Mg(2+) as cofactor. Post-translationally, acetylated. Deacetylation by the SIR2-homolog deacetylase activates the enzyme.

It carries out the reaction acetate + ATP + CoA = acetyl-CoA + AMP + diphosphate. Catalyzes the conversion of acetate into acetyl-CoA (AcCoA), an essential intermediate at the junction of anabolic and catabolic pathways. AcsA undergoes a two-step reaction. In the first half reaction, AcsA combines acetate with ATP to form acetyl-adenylate (AcAMP) intermediate. In the second half reaction, it can then transfer the acetyl group from AcAMP to the sulfhydryl group of CoA, forming the product AcCoA. In Shewanella oneidensis (strain ATCC 700550 / JCM 31522 / CIP 106686 / LMG 19005 / NCIMB 14063 / MR-1), this protein is Acetyl-coenzyme A synthetase.